The following is a 1497-amino-acid chain: Collagen alpha-2(V) chain (1497 aa).

Positions 1–26 (MMANWVGARPLLILSVLLGYCVSIKA) are cleaved as a signal peptide. The VWFC domain occupies 38-96 (IACTQHGQMYLNRDIWKPSPCQICVCDNGAILCDKIECPEVLNCANPITPTGECCPVCP). The tract at residues 103-1265 (TSFGRGRKGQ…PDDTNKTDPG (1163 aa)) is disordered. The Cell attachment site motif lies at 141 to 143 (RGD). Residues 155–164 (PQGIDGEPGV) are compositionally biased toward low complexity. A compositionally biased stretch (pro residues) spans 168–180 (PGAPGPPGHPSHP). Residues 210 to 225 (PGSVGPVGPRGPQGLQ) are compositionally biased toward low complexity. A compositionally biased stretch (pro residues) spans 234-246 (AGPPGEPGEPGPM). Proline 288, proline 291, and proline 294 each carry 4-hydroxyproline. 2 stretches are compositionally biased toward low complexity: residues 320 to 338 (EAGP…PRGM) and 425 to 441 (TPGA…SGPP). Positions 504–506 (RGD) match the Cell attachment site motif. Positions 550 to 559 (GPKGGQGDPG) are enriched in gly residues. Residues 602–611 (SIGIRGQPGS) are compositionally biased toward low complexity. 4-hydroxyproline is present on residues proline 609 and proline 615. A compositionally biased stretch (basic and acidic residues) spans 708-719 (RGERGNPGERGE). Residues 730–739 (GMAGGHGPDG) show a composition bias toward gly residues. The segment covering 744-756 (PGPTGTIGDTGPP) has biased composition (low complexity). Basic and acidic residues predominate over residues 774 to 785 (KGDRGGIGEKGA). Low complexity-rich tracts occupy residues 824-839 (PPGS…ENGP) and 878-891 (LAGS…HGVP). Gly residues predominate over residues 892–901 (GLKGGRGTQG). A compositionally biased stretch (pro residues) spans 917–927 (PPGPAGAPGPA). 3 short sequence motifs (cell attachment site) span residues 942–944 (RGD), 1065–1067 (RGD), and 1068–1070 (RGD). A compositionally biased stretch (basic and acidic residues) spans 1061–1070 (AVGERGDRGD). A compositionally biased stretch (low complexity) spans 1091-1112 (APGDAGQRGEPGSRGPVGPPGR). Short sequence motifs (cell attachment site) lie at residues 1125-1127 (RGD) and 1134-1136 (RGD). The span at 1125-1139 (RGDKGDNGDRGDRGQ) shows a compositional bias: basic and acidic residues. Pro residues-rich tracts occupy residues 1169–1179 (PFGPRGPPGPV) and 1209–1224 (EGPP…PGPP). Residues 1228-1497 (TAALGDIMGH…GLDIGPVCFM (270 aa)) constitute a propeptide, C-terminal propeptide. The N-linked (GlcNAc...) asparagine glycan is linked to asparagine 1260. Residues 1264–1497 (PGIHVTLKSL…GLDIGPVCFM (234 aa)) enclose the Fibrillar collagen NC1 domain. 3 disulfide bridges follow: cysteine 1294/cysteine 1326, cysteine 1334/cysteine 1495, and cysteine 1403/cysteine 1448. Ca(2+) is bound by residues aspartate 1312, asparagine 1314, glutamine 1315, and aspartate 1320. N-linked (GlcNAc...) asparagine glycosylation occurs at asparagine 1398.

This sequence belongs to the fibrillar collagen family. In terms of assembly, trimers of two alpha 1(V) and one alpha 2(V) chains expressed in most tissues and trimers of one alpha 1(V), one alpha 2(V), and one alpha 3(V) chains with a more limited distribution of expression. Prolines at the third position of the tripeptide repeating unit (G-X-P) are hydroxylated in some or all of the chains. Probably 3-hydroxylated on prolines by LEPREL1. Post-translationally, hydroxylation on proline residues within the sequence motif, GXPG, is most likely to be 4-hydroxy as this fits the requirement for 4-hydroxylation in vertebrates.

It is found in the secreted. The protein localises to the extracellular space. Its subcellular location is the extracellular matrix. In terms of biological role, type V collagen is a member of group I collagen (fibrillar forming collagen). It is a minor connective tissue component of nearly ubiquitous distribution. Type V collagen binds to DNA, heparan sulfate, thrombospondin, heparin, and insulin. Type V collagen is a key determinant in the assembly of tissue-specific matrices. The polypeptide is Collagen alpha-2(V) chain (Mus musculus (Mouse)).